A 447-amino-acid chain; its full sequence is Argininosuccinate synthase (447 aa).

ATP-binding positions include 20–28 and Ala-46; that span reads AFSGGLDTS. Tyr-102 lines the L-citrulline pocket. Residues Gly-132 and Thr-134 each contribute to the ATP site. The L-aspartate site is built by Thr-134, Asn-138, and Asp-139. Asn-138 is a binding site for L-citrulline. Asp-139 serves as a coordination point for ATP. The L-citrulline site is built by Arg-142 and Ser-195. Asp-197 contacts ATP. L-citrulline contacts are provided by Thr-204, Glu-206, and Glu-283.

It belongs to the argininosuccinate synthase family. Type 2 subfamily. In terms of assembly, homotetramer.

The protein localises to the cytoplasm. The enzyme catalyses L-citrulline + L-aspartate + ATP = 2-(N(omega)-L-arginino)succinate + AMP + diphosphate + H(+). It participates in amino-acid biosynthesis; L-arginine biosynthesis; L-arginine from L-ornithine and carbamoyl phosphate: step 2/3. The protein is Argininosuccinate synthase of Neisseria meningitidis serogroup C / serotype 2a (strain ATCC 700532 / DSM 15464 / FAM18).